The sequence spans 378 residues: RIB43A-like with coiled-coils protein 1 (378 aa).

Coiled coils occupy residues 153-250 (RMQQ…VTSD) and 279-334 (EQRA…CAEF).

It belongs to the RIB43A family. In terms of assembly, microtubule inner protein component of sperm flagellar doublet microtubules.

It is found in the cytoplasm. The protein resides in the cytoskeleton. The protein localises to the flagellum axoneme. The sequence is that of RIB43A-like with coiled-coils protein 1 (Ribc1) from Rattus norvegicus (Rat).